Consider the following 335-residue polypeptide: Atypical chemokine receptor 1 (335 aa).

Topologically, residues 1 to 62 are extracellular; that stretch reads MGNCLHPAEL…CNLLDDSALP (62 aa). N16, N26, and N32 each carry an N-linked (GlcNAc...) asparagine glycan. Cystine bridges form between C50–C275 and C128–C194. The helical transmembrane segment at 63-83 threads the bilayer; it reads FFILVSVLGILASGTVLFMFF. Residues 84-94 are Cytoplasmic-facing; it reads RPLFHWQLCPG. The chain crosses the membrane as a helical span at residues 95–115; that stretch reads WPVLAQLAVGSALFSIVVPIL. Over 116–128 the chain is Extracellular; that stretch reads APGLGNTRSSALC. Residues 129–152 traverse the membrane as a helical segment; sequence SLGYCVWYGSAFAQALLLGCHASL. Topologically, residues 153-165 are cytoplasmic; sequence GPKLGAGQVPGLT. The helical transmembrane segment at 166 to 186 threads the bilayer; that stretch reads LGLSVGLWGVAALLTLPITLA. Over 187-206 the chain is Extracellular; the sequence is SGASGGLCTPAYSMELKALQ. The chain crosses the membrane as a helical span at residues 207–227; sequence ATHAVACLAVFVLLPLGLFGA. Topologically, residues 228–243 are cytoplasmic; it reads KGLKKALGMGPGPWMN. The helical transmembrane segment at 244 to 264 threads the bilayer; sequence ILWAWFIFWWPHGVVLGLDFL. The Extracellular portion of the chain corresponds to 265–286; sequence VRSKLLLLSTCLAQQALDLLLN. The helical transmembrane segment at 287–307 threads the bilayer; the sequence is LAEALAILHCVATPLLLALFC. Residues 308-335 are Cytoplasmic-facing; the sequence is HQATRTLLPSLPLPEGWSSHLDTLGSES.

Belongs to the G-protein coupled receptor 1 family. Atypical chemokine receptor subfamily. As to quaternary structure, (Microbial infection) Interacts (via N-terminal extracellular domain) with Plasmodium knowlesi Duffy receptor alpha form (DBPalpha) (via region II).

The protein resides in the early endosome. It localises to the recycling endosome. Its subcellular location is the membrane. In terms of biological role, atypical chemokine receptor that controls chemokine levels and localization via high-affinity chemokine binding that is uncoupled from classic ligand-driven signal transduction cascades, resulting instead in chemokine sequestration, degradation, or transcytosis. Also known as interceptor (internalizing receptor) or chemokine-scavenging receptor or chemokine decoy receptor. Has a promiscuous chemokine-binding profile, interacting with inflammatory chemokines of both the CXC and the CC subfamilies but not with homeostatic chemokines. Acts as a receptor for chemokines including CCL2, CCL5, CCL7, CCL11, CCL13, CCL14, CCL17, CXCL5, CXCL6, IL8/CXCL8, CXCL11, GRO, RANTES, MCP-1 and TARC. May regulate chemokine bioavailability and, consequently, leukocyte recruitment through two distinct mechanisms: when expressed in endothelial cells, it sustains the abluminal to luminal transcytosis of tissue-derived chemokines and their subsequent presentation to circulating leukocytes; when expressed in erythrocytes, serves as blood reservoir of cognate chemokines but also as a chemokine sink, buffering potential surges in plasma chemokine levels. (Microbial infection) Acts as a receptor for the malaria parasite Plasmodium knowlesi. The sequence is that of Atypical chemokine receptor 1 (ACKR1) from Macaca mulatta (Rhesus macaque).